Reading from the N-terminus, the 464-residue chain is Cytochrome P450 85A1 (464 aa).

The helical transmembrane segment at 2–22 threads the bilayer; the sequence is AFFLIFLSSFFGLCIFCTALL. A heme-binding site is contributed by cysteine 414.

This sequence belongs to the cytochrome P450 family. Heme is required as a cofactor. Expressed in sub-meristematic regions of shoot and root apexes, in zones undergoing lateral root formation, in fruits, and in all flower parts, with a high expression in young flower buds and at the joint in the pedicel.

The protein localises to the membrane. The enzyme catalyses 6-deoxocastasterone + reduced [NADPH--hemoprotein reductase] + O2 = 6alpha-hydroxycastasterone + oxidized [NADPH--hemoprotein reductase] + H2O + H(+). It carries out the reaction 6alpha-hydroxycastasterone + reduced [NADPH--hemoprotein reductase] + O2 = castasterone + oxidized [NADPH--hemoprotein reductase] + 2 H2O + H(+). It catalyses the reaction 6-deoxocastasterone + 2 reduced [NADPH--hemoprotein reductase] + 2 O2 = castasterone + 2 oxidized [NADPH--hemoprotein reductase] + 3 H2O + 2 H(+). The protein operates within plant hormone biosynthesis; brassinosteroid biosynthesis. In terms of biological role, catalyzes the C6-oxidation step in brassinosteroids biosynthesis. Converts 6-deoxocastasterone (6-deoxoCS) to castasterone (CS). May also convert 6-deoxoteasterone (6-deoxoTE) to teasterone (TE), 3-dehydro-6-deoxoteasterone (6-deoxo3DT, 6-deoxo3DHT) to 3-dehydroteasterone (3DT, 3-DHT), and 6-deoxotyphasterol (6-deoxoTY) to typhasterol (TY), but not castasterone (CS) to brassinolide (BL). This chain is Cytochrome P450 85A1, found in Solanum lycopersicum (Tomato).